The chain runs to 546 residues: MDIKYGHVLAYRNVQFYVSECGYKAYFFCGGCLFAVGRPRIDDEYLPELAKIGLVLRGGQSKPLAAHVRRELLRRGMKWAFSSDEDELFIDSIAVLSRDGICSERELCGLLCLETYDPDIAKYMVPTNAISGLTIQAAYDFPHDRTIHIPEFPIITDIYSDLVYECSRDAFVLTCARLTELPKSLSDLVEGLFDGIPTPREALSSEIFGRRVDVIVTAKKAANTTTVQRAWDILQHGCRGKLNVNSNRTNPVQRKKHARFSSFVQIKYIPPVFKIWSCDTSSCMPSTSLNKLWEIFWKVDSVFNMNMLNLNSNLYTENGSQSDLEIIQSELGMISNALFGRHASMFVGVGPENKNISPSQKFLLLQYIHILNRLPNCYDLIRELCDHHTSTIEGECPTAMPDCALADMTNSLFRAILFLGMATEIVVNWMPSSLEEPTSRVPSPSAFADATTLLDVAETSAPKSIQDLKIRKLALILDGLYKDIDPIDVALRESVGEDTAELLCAAIDISVLSAFEHWGYYSRYMQCIISLIDTRLRNSGCITICS.

This sequence belongs to the alphaherpesvirinae HHV-1 UL21 protein family.

Its subcellular location is the virion tegument. The protein resides in the host cytoplasm. It localises to the host nucleus. Its function is as follows. May facilitate the viral transport through neural circuits. This Gallus gallus (Chicken) protein is Tegument protein UL21 homolog (MDV033).